The sequence spans 163 residues: Beta-lactoglobulin-2 (163 aa).

2 disulfides stabilise this stretch: C66–C161 and C106–C120.

Belongs to the calycin superfamily. Lipocalin family. As to quaternary structure, monomer.

It localises to the secreted. In terms of biological role, lactoglobulin is the primary component of whey, it binds retinol and is probably involved in the transport of that molecule. The chain is Beta-lactoglobulin-2 (LGB2) from Felis catus (Cat).